Reading from the N-terminus, the 875-residue chain is Kelch-like protein 29 (875 aa).

The span at 115–126 shows a compositional bias: polar residues; sequence WGQTPINQSTPW. Disordered regions lie at residues 115–145 and 248–291; these read WGQT…PGTG and GPTA…DSAH. Positions 131–140 are enriched in basic and acidic residues; sequence PPSKQMRESD. Residues 329-401 enclose the BTB domain; sequence TDLKIVVEGR…VYTGSLVIDS (73 aa). Kelch repeat units follow at residues 585–635, 637–683, 684–730, 732–778, 779–821, and 822–870; these read VIVL…VSAG, NIYL…VYDG, KIYT…VCGG, IYVF…TLNG, FVFI…VLDG, and KIYA…VIKK.

The chain is Kelch-like protein 29 (KLHL29) from Homo sapiens (Human).